The sequence spans 117 residues: Large ribosomal subunit protein bL20 (117 aa).

The protein belongs to the bacterial ribosomal protein bL20 family.

In terms of biological role, binds directly to 23S ribosomal RNA and is necessary for the in vitro assembly process of the 50S ribosomal subunit. It is not involved in the protein synthesizing functions of that subunit. In Symbiobacterium thermophilum (strain DSM 24528 / JCM 14929 / IAM 14863 / T), this protein is Large ribosomal subunit protein bL20.